We begin with the raw amino-acid sequence, 133 residues long: MARKKEFRYRGYTLDELLNMSLEEFAKLLPSRQRRSLKRGLSPEQKKLLRKIRLAKKGKYNKPIRTHSRDMIVLPEMVGMTIHVYNGKEFVPVEIKEEMIGHYLGEFAMTRKVVQHGSPGVGATRSSMFVAVK.

This sequence belongs to the universal ribosomal protein uS19 family. As to quaternary structure, part of the 30S ribosomal subunit.

Protein S19 forms a complex with S13 that binds strongly to the 16S ribosomal RNA. In Thermococcus kodakarensis (strain ATCC BAA-918 / JCM 12380 / KOD1) (Pyrococcus kodakaraensis (strain KOD1)), this protein is Small ribosomal subunit protein uS19.